Here is a 225-residue protein sequence, read N- to C-terminus: ATP-dependent dethiobiotin synthetase BioD (225 aa).

12–17 provides a ligand contact to ATP; sequence EVGKTY. Residue threonine 16 coordinates Mg(2+). Residue lysine 37 is part of the active site. Serine 41 serves as a coordination point for substrate. Residues aspartate 52, 114-117, and 174-175 each bind ATP; these read EGAG and NC. Residues aspartate 52 and glutamate 114 each contribute to the Mg(2+) site.

The protein belongs to the dethiobiotin synthetase family. In terms of assembly, homodimer. Requires Mg(2+) as cofactor.

The protein resides in the cytoplasm. The enzyme catalyses (7R,8S)-7,8-diammoniononanoate + CO2 + ATP = (4R,5S)-dethiobiotin + ADP + phosphate + 3 H(+). It functions in the pathway cofactor biosynthesis; biotin biosynthesis; biotin from 7,8-diaminononanoate: step 1/2. In terms of biological role, catalyzes a mechanistically unusual reaction, the ATP-dependent insertion of CO2 between the N7 and N8 nitrogen atoms of 7,8-diaminopelargonic acid (DAPA, also called 7,8-diammoniononanoate) to form a ureido ring. The protein is ATP-dependent dethiobiotin synthetase BioD of Francisella tularensis subsp. mediasiatica (strain FSC147).